A 155-amino-acid chain; its full sequence is Small ribosomal subunit protein uS7c (155 aa).

This sequence belongs to the universal ribosomal protein uS7 family. Part of the 30S ribosomal subunit.

The protein localises to the plastid. The protein resides in the chloroplast. Its function is as follows. One of the primary rRNA binding proteins, it binds directly to 16S rRNA where it nucleates assembly of the head domain of the 30S subunit. The polypeptide is Small ribosomal subunit protein uS7c (rps7) (Staurastrum punctulatum (Green alga)).